The following is a 202-amino-acid chain: UDP-N-acetylglucosamine transferase subunit ALG13 (202 aa).

This sequence belongs to the glycosyltransferase 28 family. As to quaternary structure, heterodimer with ALG14 to form a functional enzyme.

It localises to the endoplasmic reticulum. The catalysed reaction is an N-acetyl-alpha-D-glucosaminyl-diphospho-di-trans,poly-cis-dolichol + UDP-N-acetyl-alpha-D-glucosamine = an N,N'-diacetylchitobiosyl-diphospho-di-trans,poly-cis-dolichol + UDP + H(+). Involved in protein N-glycosylation. Essential for the second step of the dolichol-linked oligosaccharide pathway. The sequence is that of UDP-N-acetylglucosamine transferase subunit ALG13 (ALG13) from Saccharomyces cerevisiae (strain ATCC 204508 / S288c) (Baker's yeast).